Reading from the N-terminus, the 710-residue chain is MRYIVSPQLVLQVGKGQEVERALYLTPYDYIDEKSPIYYFLRSHLNIQQPEIVKRHILLTLRMTQLKGYLGNLLDIKDDIIIYSHKNNLEYSYVDNTIFNPFVYTQKKTLLKNDSFLYNVYPGACDFLVIWVARACDTSIPEFGSYEDVDNNIIKFETMLMEVFPQLDLDITVESKFNNIFRTNLKLTGLKKIIQRVQDLDINYKSLLSRYDEHFINMTGNHFILNDEQLNLSIWDLDGTLALSSDGDTVMINNVKLFTDLVSDIDTQMERIKGDITYKVHLATPINSRIKLDIETSFIFIETATNNILLSSDKKISIILAKNHISIKVKNHIPNIEKYFTFLVIAINAMFNSVQKSADFTKVETVYWSRICQNTKNKNRKPIIINYLDPGMKKISNNFYKSDEKEVFINDNGIMFTCMDPLGKYNKVGFLNIFHDMRKYCIPCCFLHDQSHRSTFSSCVHQIDVEKKIVSPYILNFGKVVTESKMSFLPIIFDAFLNDGMTANMEQDNKRLKETSGYHIVRCCAGDDIVRLRTTSDIIQFVNEDKNILIVNDMVYFPMNASDIGKKIHILIQEIVHEVMIVKKKESSDKIDFFPPNYKLLKDLFPKQTIQTPIQSDAGMVLTTDGFYIDGKLFNEDLSSKYVTFTKNVIASDAVAKYFSPLFKYVISEAKDRFIKTWMINIMIHMNVDPNNIIPTLEKYYPNSGRAQIN.

It belongs to the poxviridae VETF large subunit family. Heterodimer of a 70 kDa and a 82 kDa subunit. Part of the early transcription complex composed of ETF, RAP94/OPG109, and the DNA-directed RNA polymerase.

Its subcellular location is the virion. Its function is as follows. Acts with RNA polymerase to initiate transcription from early gene promoters. Is recruited by the RPO-associated protein of 94 kDa RAP94/OPG109 to form the early transcription complex, which also contains the core RNA polymerase. ETF heterodimer binds to early gene promoters. The protein is Early transcription factor 82 kDa subunit (OPG133) of Bos taurus (Bovine).